The primary structure comprises 476 residues: Amino acid permease 3 (476 aa).

At 1-33 the chain is on the cytoplasmic side; the sequence is MVQNHQTVLAVDMPQTGGSKYLDDDGKNKRTGS. A helical membrane pass occupies residues 34–54; it reads VWTASAHIITAVIGSGVLSLA. Residues 55-57 are Extracellular-facing; that stretch reads WAT. A helical membrane pass occupies residues 58 to 78; it reads AQLGWLAGPVVMLLFSAVTYF. The Cytoplasmic segment spans residues 79-122; that stretch reads TSSLLAACYRSGDPISGKRNYTYMDAVRSNLGGVKVTLCGIVQY. Residues 123–143 traverse the membrane as a helical segment; that stretch reads LNIFGVAIGYTIASAISMMAI. The Extracellular segment spans residues 144–166; sequence KRSNCFHKSGGKDPCHMNSNPYM. 2 helical membrane passes run 167 to 187 and 188 to 208; these read IAFG…QLWW and LSIL…ALGI. Residues 209-277 lie on the Extracellular side of the membrane; sequence AQVVVNGKVK…EEKTMKKATL (69 aa). The chain crosses the membrane as a helical span at residues 278 to 298; sequence VSVSVTTMFYMLCGCMGYAAF. Residues 299 to 300 lie on the Cytoplasmic side of the membrane; it reads GD. The helical transmembrane segment at 301–321 threads the bilayer; the sequence is LSPGNLLTGFGFYNPYWLLDI. Residues 322–324 lie on the Extracellular side of the membrane; sequence ANA. The chain crosses the membrane as a helical span at residues 325 to 345; sequence AIVIHLIGAYQVYCQPLFAFI. Over 346–384 the chain is Cytoplasmic; it reads EKQASIQFPDSEFIAKDIKIPIPGFKPLRLNVFRLIWRT. Transmembrane regions (helical) follow at residues 385 to 405 and 406 to 426; these read VFVI…DVVG and LLGA…MYIA. Topologically, residues 427 to 441 are cytoplasmic; it reads QKKIPRWSTRWVCLQ. Residues 442–462 form a helical membrane-spanning segment; that stretch reads VFSLGCLVVSIAAAAGSIAGV. Residues 463–476 lie on the Extracellular side of the membrane; that stretch reads LLDLKSYKPFRSEY.

The protein belongs to the amino acid/polyamine transporter 2 family. Amino acid/auxin permease (AAAP) (TC 2.A.18.2) subfamily. In terms of tissue distribution, expressed in the root phloem. Detected in stamens, in cotyledons, and in major veins of mature leaves.

It localises to the cell membrane. The protein localises to the nucleus membrane. Its subcellular location is the endomembrane system. Its activity is regulated as follows. Inhibited by carbonylcyanide m-chlorophenylhydrazone and 2,4-dinitrophenol. Its function is as follows. Amino acid-proton symporter. Stereospecific transporter with a broad specificity for GABA, tryptophan and both neutral and basic amino acids. High affinity transport of cationic amino acids. The protein is Amino acid permease 3 (AAP3) of Arabidopsis thaliana (Mouse-ear cress).